We begin with the raw amino-acid sequence, 528 residues long: MSICEKSLHWADKVAHKIIKERADCDQYTCASGITPSGTVHIGNFREIISVDLVVRALRDQGKSVRFVHSWDDYDVFRRIPDNVPAQDELKQYIRMPITSVPDPFQQEDSYARHHEREIESALPEVGIYPEYVYQSKQYQAGVYAQEIKIALDNRHRIQAILNEYRDEQHKISGTYWPVSVFCTACHKDCTTVDAWDSHWCLQYHCECGHGEQVDLRQTSAVKLSWRVDWAMRWSKEHVVFEPAGKDHHSQGGSFDTARLISDHIYHWPAPVSFRYDFIGLKGLPGKMSSSAGKVVGLRDVLEVYQPEVLRYLFVSTRPNTEFSISFDLDVLKIYEDYDKSERVAWGIHAAKSEHEFMRHKRIYELSQVRGMPPCISYQVPFRHVCNILQINSGDISAVLAFFSDIHKDQIERFVRRCQCAWNWIRDAGAPDDFKFTLKEDGVRVPLSAEITEALRLIRDTLVPRTDVLSEKELSAELYAVARQIPVGSKELFTALYQVLIGKNQGPRLAGFMKVIGTQRLHRMLSVY.

A 'HIGH' region motif is present at residues proline 36–asparagine 44. The short motif at lysine 287–serine 291 is the 'KMSKS' region element.

The protein belongs to the class-I aminoacyl-tRNA synthetase family.

The protein resides in the cytoplasm. It catalyses the reaction tRNA(Lys) + L-lysine + ATP = L-lysyl-tRNA(Lys) + AMP + diphosphate. The protein is Lysine--tRNA ligase (lysS) of Treponema pallidum (strain Nichols).